The following is an 83-amino-acid chain: Scyreptin (83 aa).

Functionally, cationic antimicrobial peptide that exhibits a potent and broad-spectrum antimicrobial activity against both bacteria and fungi, as well as against the multidrug-resistant bacteria P.aeruginosa. Exhibits rapid bactericidal kinetic. Acts by destroying the integrity of bacterial membranes, leading to bacterial death. Also exhibits potent anti-biofilm activity against P.aeruginosa. Shows high thermal stability and ion tolerance, as it maintains antibacterial activity even when heated to 100 degrees Celsius for 30 minutes and in presence of high levels of NaCl, CaCl(2) and MgCl(2). Does not show cytotoxicity and hemolytic activity. In a mouse model of burn infection, exhibits a remarkably reduction in the bacterial load caused by multidrug-resistant P.aeruginosa at the site of infection, and promotes wound healing. This is Scyreptin from Scylla paramamosain (Mud crab).